The sequence spans 445 residues: Phosphoglucosamine mutase (445 aa).

Serine 102 serves as the catalytic Phosphoserine intermediate. Mg(2+)-binding residues include serine 102, aspartate 241, aspartate 243, and aspartate 245. Position 102 is a phosphoserine (serine 102).

It belongs to the phosphohexose mutase family. It depends on Mg(2+) as a cofactor. Activated by phosphorylation.

The catalysed reaction is alpha-D-glucosamine 1-phosphate = D-glucosamine 6-phosphate. Its function is as follows. Catalyzes the conversion of glucosamine-6-phosphate to glucosamine-1-phosphate. The protein is Phosphoglucosamine mutase of Aliivibrio salmonicida (strain LFI1238) (Vibrio salmonicida (strain LFI1238)).